We begin with the raw amino-acid sequence, 320 residues long: 1-aminocyclopropane-1-carboxylate oxidase (320 aa).

The Fe2OG dioxygenase domain occupies 156 to 256 (PTFGTKVSNY…RMSIASFYNP (101 aa)). Fe cation-binding residues include His-180, Asp-182, and His-237.

It belongs to the iron/ascorbate-dependent oxidoreductase family. Fe cation serves as cofactor.

It catalyses the reaction 1-aminocyclopropane-1-carboxylate + L-ascorbate + O2 = ethene + L-dehydroascorbate + hydrogen cyanide + CO2 + 2 H2O. Its pathway is alkene biosynthesis; ethylene biosynthesis via S-adenosyl-L-methionine; ethylene from S-adenosyl-L-methionine: step 2/2. The sequence is that of 1-aminocyclopropane-1-carboxylate oxidase (ACO) from Brassica juncea (Indian mustard).